A 520-amino-acid polypeptide reads, in one-letter code: Alkaline nuclease (520 aa).

Belongs to the herpesviridae alkaline nuclease family. Interacts with major DNA-binding protein; this interaction increases the nuclease processivity of the alkaline exonuclease.

Its subcellular location is the host nucleus. It is found in the host cytoplasm. Its function is as follows. Plays a role in processing non linear or branched viral DNA intermediates in order to promote the production of mature packaged unit-length linear progeny viral DNA molecules. Exhibits endonuclease and exonuclease activities and accepts both double-stranded and single-stranded DNA as substrate. Exonuclease digestion of DNA is in the 5'-&gt; 3' direction and the products are 5'-monophosphate nucleosides. Additionally, forms a recombinase with the major DNA-binding protein, which displays strand exchange activity. The sequence is that of Alkaline nuclease (UL12) from Psittacid herpesvirus 1 (isolate Amazon parrot/-/97-0001/1997) (PsHV-1).